The sequence spans 98 residues: MAPINLNLILAFSLALLGVLIYRTHLMSTLLCLEGMMLSLFILMTLLISHFHMYSMAMAPLILLVFSACEAGVGLALLVKISTSYGNDYVQNLNLLQC.

3 helical membrane passes run 1-21 (MAPINLNLILAFSLALLGVLI), 28-48 (STLLCLEGMMLSLFILMTLLI), and 59-79 (APLILLVFSACEAGVGLALLV).

This sequence belongs to the complex I subunit 4L family. As to quaternary structure, core subunit of respiratory chain NADH dehydrogenase (Complex I) which is composed of 45 different subunits.

It is found in the mitochondrion inner membrane. The catalysed reaction is a ubiquinone + NADH + 5 H(+)(in) = a ubiquinol + NAD(+) + 4 H(+)(out). Its function is as follows. Core subunit of the mitochondrial membrane respiratory chain NADH dehydrogenase (Complex I) which catalyzes electron transfer from NADH through the respiratory chain, using ubiquinone as an electron acceptor. Part of the enzyme membrane arm which is embedded in the lipid bilayer and involved in proton translocation. In Perameles gunnii (Eastern barred bandicoot), this protein is NADH-ubiquinone oxidoreductase chain 4L (MT-ND4L).